The following is a 196-amino-acid chain: MSQRSAAVFRETKETSIRLDLVVDGQGLVNVHTGFGMADHVITLAAFWAGFDLTLSCTGDLEIDAHHTVEDVGLCLGQALAEALGERSGIARVGFARVPMDEALADVCIDISGRPWLEWRGDDLLPPVIAGQERDLWREFLKAFASAARMNLHVSFLYGRNGHHLLESAAKGLGLALRQAVRRDRETLLSTKGSLD.

It belongs to the imidazoleglycerol-phosphate dehydratase family.

It localises to the cytoplasm. It catalyses the reaction D-erythro-1-(imidazol-4-yl)glycerol 3-phosphate = 3-(imidazol-4-yl)-2-oxopropyl phosphate + H2O. It functions in the pathway amino-acid biosynthesis; L-histidine biosynthesis; L-histidine from 5-phospho-alpha-D-ribose 1-diphosphate: step 6/9. The protein is Imidazoleglycerol-phosphate dehydratase of Nitratidesulfovibrio vulgaris (strain DSM 19637 / Miyazaki F) (Desulfovibrio vulgaris).